The primary structure comprises 272 residues: Putative phosphoenolpyruvate synthase regulatory protein (272 aa).

152–159 (GVSRCGKT) lines the ADP pocket.

Belongs to the pyruvate, phosphate/water dikinase regulatory protein family. PSRP subfamily.

The enzyme catalyses [pyruvate, water dikinase] + ADP = [pyruvate, water dikinase]-phosphate + AMP + H(+). It catalyses the reaction [pyruvate, water dikinase]-phosphate + phosphate + H(+) = [pyruvate, water dikinase] + diphosphate. Bifunctional serine/threonine kinase and phosphorylase involved in the regulation of the phosphoenolpyruvate synthase (PEPS) by catalyzing its phosphorylation/dephosphorylation. In Ectopseudomonas mendocina (strain ymp) (Pseudomonas mendocina), this protein is Putative phosphoenolpyruvate synthase regulatory protein.